Here is a 411-residue protein sequence, read N- to C-terminus: Trigger factor (411 aa).

One can recognise a PPIase FKBP-type domain in the interval 162–240 (EDLVVIDYTT…IKEVKRRQNI (79 aa)).

This sequence belongs to the FKBP-type PPIase family. Tig subfamily.

It is found in the cytoplasm. The enzyme catalyses [protein]-peptidylproline (omega=180) = [protein]-peptidylproline (omega=0). Functionally, involved in protein export. Acts as a chaperone by maintaining the newly synthesized protein in an open conformation. Functions as a peptidyl-prolyl cis-trans isomerase. In Thermodesulfovibrio yellowstonii (strain ATCC 51303 / DSM 11347 / YP87), this protein is Trigger factor.